The chain runs to 171 residues: Cadmium-induced protein AS8 (171 aa).

This Arabidopsis thaliana (Mouse-ear cress) protein is Cadmium-induced protein AS8.